An 87-amino-acid chain; its full sequence is Small ribosomal subunit protein bS20 (87 aa).

The tract at residues 1–29 is disordered; it reads MANTAQARKRARQAVKQNAHNSSQRSTLR. The span at 20 to 29 shows a compositional bias: polar residues; it reads HNSSQRSTLR.

This sequence belongs to the bacterial ribosomal protein bS20 family.

Its function is as follows. Binds directly to 16S ribosomal RNA. The chain is Small ribosomal subunit protein bS20 from Herminiimonas arsenicoxydans.